We begin with the raw amino-acid sequence, 130 residues long: Small ribosomal subunit protein uS8 (130 aa).

This sequence belongs to the universal ribosomal protein uS8 family. Part of the 30S ribosomal subunit.

One of the primary rRNA binding proteins, it binds directly to 16S rRNA central domain where it helps coordinate assembly of the platform of the 30S subunit. This is Small ribosomal subunit protein uS8 from Methanosarcina mazei (strain ATCC BAA-159 / DSM 3647 / Goe1 / Go1 / JCM 11833 / OCM 88) (Methanosarcina frisia).